Consider the following 2034-residue polypeptide: Pecanex-like protein 3 (2034 aa).

The next 2 helical transmembrane spans lie at 33–53 (CFHL…YMVL) and 54–74 (PPSL…FATI). Residues 96–118 (STMGELEEEPAQGDSNPPRDPGV) are disordered. S127 bears the Phosphoserine mark. T129 bears the Phosphothreonine mark. Disordered stretches follow at residues 193-242 (IGDL…PLLK), 260-517 (DRAL…LRPP), and 540-625 (VLPA…SHSR). Over residues 294–303 (KAGSSDSCFS) the composition is skewed to polar residues. The span at 305–319 (TDRETLSSFKSEKTN) shows a compositional bias: basic and acidic residues. N319 carries an N-linked (GlcNAc...) asparagine glycan. At T370 the chain carries Phosphothreonine. Basic residues predominate over residues 391–409 (PSKRQPPLRRHSPPGRAPR). Residues S392 and S431 each carry the phosphoserine modification. Polar residues predominate over residues 427 to 436 (GSELSPASSL). Residues 444–460 (TDSSSSTSCYSPESSRG) are compositionally biased toward low complexity. Residues 488–497 (TQRTPSTASA) show a composition bias toward polar residues. S505 bears the Phosphoserine mark. The next 7 helical transmembrane spans lie at 790-812 (VLEN…LLLL), 819-836 (IWVF…YSLL), 852-872 (WVIA…IWLL), 880-900 (PFPP…FFCA), 903-923 (VATV…LPQV), 946-968 (SPLT…YGFC), and 980-1000 (HVPV…YHLS). Residue S1025 is modified to Phosphoserine. The next 4 helical transmembrane spans lie at 1053-1073 (LVMC…TVFI), 1078-1098 (VLGF…HYLL), 1244-1264 (FVLT…HAFA), and 1280-1300 (LLSG…VFIM). Residue S1697 is modified to Phosphoserine. A glycan (N-linked (GlcNAc...) asparagine) is linked at N1770. A disordered region spans residues 1844 to 2034 (GGLTSLSNNP…AAQPLLEHQY (191 aa)). Residues 1890-1910 (RPPPLLQWPPPRLPGPPPASP) show a composition bias toward pro residues. Phosphoserine is present on S1909. The span at 1925 to 1939 (GLLSSEGPSGKWSLG) shows a compositional bias: low complexity. At S1955 the chain carries Phosphoserine. Positions 1969 to 1978 (LSLSLSLSLS) are enriched in low complexity.

The protein belongs to the pecanex family.

It is found in the membrane. The protein is Pecanex-like protein 3 of Homo sapiens (Human).